The primary structure comprises 175 residues: Vitamin K epoxide reductase complex subunit 1-like protein 1 (175 aa).

Residues Met1–Arg12 lie on the Cytoplasmic side of the membrane. Residues Trp13–Val35 form a helical membrane-spanning segment. Residues Glu36–Asn86 lie on the Lumenal side of the membrane. Cys49 and Cys57 are joined by a disulfide. Asn86 contacts (S)-warfarin. A helical transmembrane segment spans residues Ser87 to Gly101. The Cytoplasmic portion of the chain corresponds to Met102–Ala106. The chain crosses the membrane as a helical span at residues Met107 to Leu134. Over Lys135–Leu137 the chain is Lumenal. Cys138 and Cys141 are disulfide-bonded. The helical transmembrane segment at Cys138 to Leu159 threads the bilayer. Cys141 and Tyr145 together coordinate phylloquinone. Position 145 (Tyr145) interacts with (S)-warfarin. Residues Val160–Asp175 are Cytoplasmic-facing.

Belongs to the VKOR family.

The protein localises to the endoplasmic reticulum membrane. It carries out the reaction phylloquinone + [protein]-disulfide + H2O = 2,3-epoxyphylloquinone + [protein]-dithiol. It catalyses the reaction phylloquinol + [protein]-disulfide = phylloquinone + [protein]-dithiol. Its activity is regulated as follows. Inhibited by warfarin (coumadin). Warfarin locks VKORC1 in both redox states into the closed conformation. In terms of biological role, involved in vitamin K metabolism. Can reduce inactive vitamin K 2,3-epoxide to active vitamin K, and may contribute to vitamin K-mediated protection against oxidative stress. Plays a role in vitamin K-dependent gamma-carboxylation of Glu residues in target proteins. The sequence is that of Vitamin K epoxide reductase complex subunit 1-like protein 1 (vkorc1l1) from Takifugu rubripes (Japanese pufferfish).